The following is a 493-amino-acid chain: Glutamyl-tRNA(Gln) amidotransferase subunit A (493 aa).

Active-site charge relay system residues include Lys78 and Ser158. Ser182 acts as the Acyl-ester intermediate in catalysis.

It belongs to the amidase family. GatA subfamily. As to quaternary structure, heterotrimer of A, B and C subunits.

It carries out the reaction L-glutamyl-tRNA(Gln) + L-glutamine + ATP + H2O = L-glutaminyl-tRNA(Gln) + L-glutamate + ADP + phosphate + H(+). In terms of biological role, allows the formation of correctly charged Gln-tRNA(Gln) through the transamidation of misacylated Glu-tRNA(Gln) in organisms which lack glutaminyl-tRNA synthetase. The reaction takes place in the presence of glutamine and ATP through an activated gamma-phospho-Glu-tRNA(Gln). This is Glutamyl-tRNA(Gln) amidotransferase subunit A from Rickettsia africae (strain ESF-5).